Consider the following 101-residue polypeptide: Small ribosomal subunit protein uS14 (101 aa).

The protein belongs to the universal ribosomal protein uS14 family. Part of the 30S ribosomal subunit. Contacts proteins S3 and S10.

Functionally, binds 16S rRNA, required for the assembly of 30S particles and may also be responsible for determining the conformation of the 16S rRNA at the A site. The protein is Small ribosomal subunit protein uS14 of Aliivibrio salmonicida (strain LFI1238) (Vibrio salmonicida (strain LFI1238)).